Consider the following 143-residue polypeptide: Nuclear transcription factor Y subunit B-4 (143 aa).

A disordered region spans residues 1-23 (MSEGFDGTENGGGGGGGGVGKEQ). Residues 9–20 (ENGGGGGGGGVG) show a composition bias toward gly residues. A DNA-binding region spans residues 27 to 33 (LPIANIG). The tract at residues 54–65 (VQECVSEFISFI) is subunit association domain (SAD). Positions 117–130 (KGSRASELPVKKDV) are enriched in basic and acidic residues. The segment at 117 to 143 (KGSRASELPVKKDVVLNGDPGSSFEGM) is disordered.

Belongs to the NFYB/HAP3 subunit family. In terms of assembly, heterotrimeric transcription factor composed of three components, NF-YA, NF-YB and NF-YC. NF-YB and NF-YC must interact and dimerize for NF-YA association and DNA binding. As to expression, ubiquitous.

It localises to the nucleus. Functionally, component of the NF-Y/HAP transcription factor complex. The NF-Y complex stimulates the transcription of various genes by recognizing and binding to a CCAAT motif in promoters. May regulate the expression of photosynthetic genes, and may be involved in chloroplast and amyloplast development. This Oryza sativa subsp. japonica (Rice) protein is Nuclear transcription factor Y subunit B-4 (NFYB4).